Reading from the N-terminus, the 177-residue chain is Large ribosomal subunit protein uL10 (177 aa).

It belongs to the universal ribosomal protein uL10 family. In terms of assembly, part of the ribosomal stalk of the 50S ribosomal subunit. The N-terminus interacts with L11 and the large rRNA to form the base of the stalk. The C-terminus forms an elongated spine to which L12 dimers bind in a sequential fashion forming a multimeric L10(L12)X complex.

In terms of biological role, forms part of the ribosomal stalk, playing a central role in the interaction of the ribosome with GTP-bound translation factors. This Legionella pneumophila (strain Corby) protein is Large ribosomal subunit protein uL10.